Here is a 148-residue protein sequence, read N- to C-terminus: Snaclec 3 (148 aa).

A signal peptide spans 1–23 (WGDSSSSASACWSCSSPLSGTEA). Cystine bridges form between Cys27–Cys38, Cys55–Cys144, and Cys121–Cys136. The region spanning 34 to 145 (YDQNCYKAFE…CSGTHSFVCK (112 aa)) is the C-type lectin domain.

This sequence belongs to the snaclec family. In terms of assembly, heterodimer; disulfide-linked. As to expression, expressed by the venom gland.

The protein resides in the secreted. In terms of biological role, interferes with one step of hemostasis (modulation of platelet aggregation, or coagulation cascade, for example). This is Snaclec 3 from Echis carinatus sochureki (Saw-scaled viper).